The primary structure comprises 217 residues: Probable septum site-determining protein MinC (217 aa).

Belongs to the MinC family. Interacts with MinD and FtsZ.

Cell division inhibitor that blocks the formation of polar Z ring septums. Rapidly oscillates between the poles of the cell to destabilize FtsZ filaments that have formed before they mature into polar Z rings. Prevents FtsZ polymerization. The chain is Probable septum site-determining protein MinC from Pelotomaculum thermopropionicum (strain DSM 13744 / JCM 10971 / SI).